Consider the following 302-residue polypeptide: Urease accessory protein UreG (302 aa).

Composition is skewed to basic and acidic residues over residues 1–32, 40–56, and 64–76; these read MHDPGEHGHGRHDHDHDHDHVHDHDHDHDHVH, HEHEHAHEHAHGHEHGH, and HAHEHAHGHTHEH. The segment at 1–76 is disordered; that stretch reads MHDPGEHGHG…EHAHGHTHEH (76 aa). 105 to 112 contributes to the GTP binding site; the sequence is GPVGSGKT.

The protein belongs to the SIMIBI class G3E GTPase family. UreG subfamily. In terms of assembly, homodimer. UreD, UreF and UreG form a complex that acts as a GTP-hydrolysis-dependent molecular chaperone, activating the urease apoprotein by helping to assemble the nickel containing metallocenter of UreC. The UreE protein probably delivers the nickel.

The protein resides in the cytoplasm. Facilitates the functional incorporation of the urease nickel metallocenter. This process requires GTP hydrolysis, probably effectuated by UreG. The sequence is that of Urease accessory protein UreG from Sorangium cellulosum (strain So ce56) (Polyangium cellulosum (strain So ce56)).